Reading from the N-terminus, the 363-residue chain is GTP-binding protein 1 (363 aa).

The OBG-type G domain maps to 63–287 (ARVAFIGFPS…LKERIWEELN (225 aa)). GTP-binding positions include 69–76 (GFPSVGKS), 115–119 (DLPGI), and 246–249 (KIDA). In terms of domain architecture, TGS spans 287 to 362 (NLYRIYTKRK…EEGDVVTIVT (76 aa)).

Belongs to the TRAFAC class OBG-HflX-like GTPase superfamily. OBG GTPase family.

The protein is GTP-binding protein 1 (gtp1) of Schizosaccharomyces pombe (strain 972 / ATCC 24843) (Fission yeast).